A 289-amino-acid polypeptide reads, in one-letter code: E3 ubiquitin-protein ligase MARCHF5 (289 aa).

An RING-CH-type zinc finger spans residues 4–73 (VDEPPEKHCW…PQCGTEYRIV (70 aa)). Residues Cys12, Cys15, Cys31, Cys33, His41, Cys44, Cys63, and Cys66 each coordinate Zn(2+). 4 helical membrane-spanning segments follow: residues 97-117 (FAAA…YGAV), 137-157 (PLFL…GKMI), 202-222 (LSVS…NLVG), and 236-256 (TILG…YFKQ).

It localises to the mitochondrion outer membrane. The protein localises to the endoplasmic reticulum membrane. It carries out the reaction S-ubiquitinyl-[E2 ubiquitin-conjugating enzyme]-L-cysteine + [acceptor protein]-L-lysine = [E2 ubiquitin-conjugating enzyme]-L-cysteine + N(6)-ubiquitinyl-[acceptor protein]-L-lysine.. The protein operates within protein modification; protein ubiquitination. Functionally, mitochondrial E3 ubiquitin-protein ligase that plays a crucial role in the control of mitochondrial morphology by acting as a positive regulator of mitochondrial fission. May play a role in the prevention of cell senescence acting as a regulator of mitochondrial quality control. The polypeptide is E3 ubiquitin-protein ligase MARCHF5 (marchf5) (Danio rerio (Zebrafish)).